Here is a 733-residue protein sequence, read N- to C-terminus: Phosphoribosylformylglycinamidine synthase subunit PurL (733 aa).

His-44 is an active-site residue. ATP is bound by residues Tyr-47 and Lys-86. Glu-88 lines the Mg(2+) pocket. Residues Ser-89–His-92 and Arg-111 each bind substrate. His-90 serves as the catalytic Proton acceptor. Asp-112 is a Mg(2+) binding site. Gln-240 serves as a coordination point for substrate. Asp-268 lines the Mg(2+) pocket. Glu-312 to Gln-314 provides a ligand contact to substrate. 2 residues coordinate ATP: Asp-496 and Gly-533. Residue Asn-534 participates in Mg(2+) binding. Ser-536 provides a ligand contact to substrate.

This sequence belongs to the FGAMS family. In terms of assembly, monomer. Part of the FGAM synthase complex composed of 1 PurL, 1 PurQ and 2 PurS subunits.

It localises to the cytoplasm. It carries out the reaction N(2)-formyl-N(1)-(5-phospho-beta-D-ribosyl)glycinamide + L-glutamine + ATP + H2O = 2-formamido-N(1)-(5-O-phospho-beta-D-ribosyl)acetamidine + L-glutamate + ADP + phosphate + H(+). Its pathway is purine metabolism; IMP biosynthesis via de novo pathway; 5-amino-1-(5-phospho-D-ribosyl)imidazole from N(2)-formyl-N(1)-(5-phospho-D-ribosyl)glycinamide: step 1/2. Part of the phosphoribosylformylglycinamidine synthase complex involved in the purines biosynthetic pathway. Catalyzes the ATP-dependent conversion of formylglycinamide ribonucleotide (FGAR) and glutamine to yield formylglycinamidine ribonucleotide (FGAM) and glutamate. The FGAM synthase complex is composed of three subunits. PurQ produces an ammonia molecule by converting glutamine to glutamate. PurL transfers the ammonia molecule to FGAR to form FGAM in an ATP-dependent manner. PurS interacts with PurQ and PurL and is thought to assist in the transfer of the ammonia molecule from PurQ to PurL. The polypeptide is Phosphoribosylformylglycinamidine synthase subunit PurL (Wolinella succinogenes (strain ATCC 29543 / DSM 1740 / CCUG 13145 / JCM 31913 / LMG 7466 / NCTC 11488 / FDC 602W) (Vibrio succinogenes)).